Here is a 520-residue protein sequence, read N- to C-terminus: Ribonuclease Y (520 aa).

The helical transmembrane segment at 5-25 threads the bilayer; sequence ITIISSLLFLIVGLVVGSLIF. The segment at 76-127 is disordered; sequence ELRGRRTETQKAENRLLQREENLDRKDTSLSKREATLERKEESISKRQQQIE. The KH domain maps to 210–273; it reads TVSVVTLPND…EIARIALEKL (64 aa). The region spanning 336–429 is the HD domain; sequence VLNHSLEVSK…VAAADALSAA (94 aa).

It belongs to the RNase Y family.

The protein resides in the cell membrane. Functionally, endoribonuclease that initiates mRNA decay. In Listeria monocytogenes serotype 1/2a (strain 10403S), this protein is Ribonuclease Y.